Here is a 290-residue protein sequence, read N- to C-terminus: 33 kDa chaperonin (290 aa).

Intrachain disulfides connect Cys235-Cys237 and Cys268-Cys271.

Belongs to the HSP33 family. In terms of processing, under oxidizing conditions two disulfide bonds are formed involving the reactive cysteines. Under reducing conditions zinc is bound to the reactive cysteines and the protein is inactive.

It is found in the cytoplasm. In terms of biological role, redox regulated molecular chaperone. Protects both thermally unfolding and oxidatively damaged proteins from irreversible aggregation. Plays an important role in the bacterial defense system toward oxidative stress. The protein is 33 kDa chaperonin of Streptococcus pyogenes serotype M12 (strain MGAS2096).